An 858-amino-acid chain; its full sequence is Bifunctional uridylyltransferase/uridylyl-removing enzyme (858 aa).

The tract at residues 1–324 is uridylyltransferase; the sequence is MSASVAAPPP…PATSGVTRVL (324 aa). The interval 325 to 681 is uridylyl-removing; the sequence is SPGRFVEKQG…ARPSPVGDAL (357 aa). Residues 443–565 enclose the HD domain; the sequence is VDQHILMVLR…VGNERRLTAL (123 aa). ACT domains are found at residues 682-761 and 790-858; these read QVLV…PEPS and ILSV…AIAV.

The protein belongs to the GlnD family. Requires Mg(2+) as cofactor.

The enzyme catalyses [protein-PII]-L-tyrosine + UTP = [protein-PII]-uridylyl-L-tyrosine + diphosphate. The catalysed reaction is [protein-PII]-uridylyl-L-tyrosine + H2O = [protein-PII]-L-tyrosine + UMP + H(+). Its activity is regulated as follows. Uridylyltransferase (UTase) activity is inhibited by glutamine, while glutamine activates uridylyl-removing (UR) activity. Functionally, modifies, by uridylylation and deuridylylation, the PII regulatory proteins (GlnB and homologs), in response to the nitrogen status of the cell that GlnD senses through the glutamine level. Under low glutamine levels, catalyzes the conversion of the PII proteins and UTP to PII-UMP and PPi, while under higher glutamine levels, GlnD hydrolyzes PII-UMP to PII and UMP (deuridylylation). Thus, controls uridylylation state and activity of the PII proteins, and plays an important role in the regulation of nitrogen assimilation and metabolism. In Burkholderia thailandensis (strain ATCC 700388 / DSM 13276 / CCUG 48851 / CIP 106301 / E264), this protein is Bifunctional uridylyltransferase/uridylyl-removing enzyme.